A 634-amino-acid chain; its full sequence is Threonine--tRNA ligase (634 aa).

Residues Met-1 to Thr-61 enclose the TGS domain. Residues Asp-243–Pro-534 are catalytic. Residues Cys-334, His-385, and His-511 each coordinate Zn(2+).

It belongs to the class-II aminoacyl-tRNA synthetase family. In terms of assembly, homodimer. Zn(2+) serves as cofactor.

It is found in the cytoplasm. The enzyme catalyses tRNA(Thr) + L-threonine + ATP = L-threonyl-tRNA(Thr) + AMP + diphosphate + H(+). Functionally, catalyzes the attachment of threonine to tRNA(Thr) in a two-step reaction: L-threonine is first activated by ATP to form Thr-AMP and then transferred to the acceptor end of tRNA(Thr). Also edits incorrectly charged L-seryl-tRNA(Thr). In Xanthomonas oryzae pv. oryzae (strain MAFF 311018), this protein is Threonine--tRNA ligase.